A 484-amino-acid polypeptide reads, in one-letter code: Acetyl-coenzyme A carboxylase carboxyl transferase subunit beta, chloroplastic (484 aa).

Positions 223 to 484 constitute a CoA carboxyltransferase N-terminal domain; that stretch reads LWIQCDNCYG…LHAFFPLNKN (262 aa). 4 residues coordinate Zn(2+): Cys227, Cys230, Cys243, and Cys246. Residues 227–246 form a C4-type zinc finger; it reads CDNCYGLMYKKVKMNVCEQC.

This sequence belongs to the AccD/PCCB family. Acetyl-CoA carboxylase is a heterohexamer composed of biotin carboxyl carrier protein, biotin carboxylase and 2 subunits each of ACCase subunit alpha and ACCase plastid-coded subunit beta (accD). Zn(2+) serves as cofactor.

It is found in the plastid. The protein resides in the chloroplast stroma. The catalysed reaction is N(6)-carboxybiotinyl-L-lysyl-[protein] + acetyl-CoA = N(6)-biotinyl-L-lysyl-[protein] + malonyl-CoA. It functions in the pathway lipid metabolism; malonyl-CoA biosynthesis; malonyl-CoA from acetyl-CoA: step 1/1. Component of the acetyl coenzyme A carboxylase (ACC) complex. Biotin carboxylase (BC) catalyzes the carboxylation of biotin on its carrier protein (BCCP) and then the CO(2) group is transferred by the transcarboxylase to acetyl-CoA to form malonyl-CoA. In Olimarabidopsis pumila (Dwarf rocket), this protein is Acetyl-coenzyme A carboxylase carboxyl transferase subunit beta, chloroplastic.